We begin with the raw amino-acid sequence, 341 residues long: Basic membrane protein D (341 aa).

The first 16 residues, 1–16 (MLKKVYYFLIFLFIVA), serve as a signal peptide directing secretion. Cys17 carries the N-palmitoyl cysteine lipid modification. Cys17 carries the S-diacylglycerol cysteine lipid modification.

Belongs to the BMP lipoprotein family. Monomer.

The protein resides in the cell inner membrane. In terms of biological role, binds adenosine and inosine. May be part of an ABC-type nucleoside uptake system involved in the purine salvage pathway. The protein is Basic membrane protein D of Borreliella burgdorferi (strain JD1) (Borrelia burgdorferi).